A 200-amino-acid polypeptide reads, in one-letter code: Putative manganese exporter (200 aa).

A run of 6 helical transmembrane segments spans residues 13 to 33, 53 to 73, 81 to 101, 110 to 130, 150 to 170, and 180 to 200; these read TEHVMSVLAISITTVALAEIG, IIAAIFLATLANHALAAWLGV, PDILKWVLVVSFLTMAGWILI, SISTRGPFVASFIAFFMAEIG, WVIVGTTLGMLLANVPVVLIG, and GLIRKVTAGLFLLMALATAFF.

The protein belongs to the GDT1 family.

The protein resides in the cell inner membrane. In terms of biological role, involved in manganese homeostasis. May function as a manganese exporter. The chain is Putative manganese exporter from Vibrio cholerae serotype O1 (strain ATCC 39541 / Classical Ogawa 395 / O395).